The primary structure comprises 356 residues: Nuclear hormone receptor family member nhr-42 (356 aa).

The nuclear receptor DNA-binding region spans Ser-7–Ser-82. The segment at Cys-10–Cys-30 adopts an NR C4-type zinc-finger fold. Residues Cys-48–Cys-70 form an NR C4-type; atypical zinc finger. Positions Thr-108 to Glu-356 constitute an NR LBD domain.

The protein belongs to the nuclear hormone receptor family.

Its subcellular location is the nucleus. Its function is as follows. Orphan nuclear receptor. The polypeptide is Nuclear hormone receptor family member nhr-42 (nhr-42) (Caenorhabditis elegans).